The following is a 496-amino-acid chain: Cobyric acid synthase (496 aa).

Residues 252-442 (DLAVAVIRLP…LHGCFDSDTY (191 aa)) enclose the GATase cobBQ-type domain. The Nucleophile role is filled by cysteine 333. Histidine 434 is a catalytic residue.

It belongs to the CobB/CobQ family. CobQ subfamily.

The protein operates within cofactor biosynthesis; adenosylcobalamin biosynthesis. Its function is as follows. Catalyzes amidations at positions B, D, E, and G on adenosylcobyrinic A,C-diamide. NH(2) groups are provided by glutamine, and one molecule of ATP is hydrogenolyzed for each amidation. In Desulforudis audaxviator (strain MP104C), this protein is Cobyric acid synthase.